The sequence spans 70 residues: Small ribosomal subunit protein bS21 (70 aa).

A disordered region spans residues Thr43–Tyr70. The span at Arg45–Arg61 shows a compositional bias: basic residues.

It belongs to the bacterial ribosomal protein bS21 family.

The polypeptide is Small ribosomal subunit protein bS21 (Dechloromonas aromatica (strain RCB)).